Here is a 245-residue protein sequence, read N- to C-terminus: 1-(5-phosphoribosyl)-5-[(5-phosphoribosylamino)methylideneamino] imidazole-4-carboxamide isomerase (245 aa).

The Proton acceptor role is filled by Asp7. Asp129 acts as the Proton donor in catalysis.

The protein belongs to the HisA/HisF family.

It localises to the cytoplasm. It carries out the reaction 1-(5-phospho-beta-D-ribosyl)-5-[(5-phospho-beta-D-ribosylamino)methylideneamino]imidazole-4-carboxamide = 5-[(5-phospho-1-deoxy-D-ribulos-1-ylimino)methylamino]-1-(5-phospho-beta-D-ribosyl)imidazole-4-carboxamide. It functions in the pathway amino-acid biosynthesis; L-histidine biosynthesis; L-histidine from 5-phospho-alpha-D-ribose 1-diphosphate: step 4/9. This chain is 1-(5-phosphoribosyl)-5-[(5-phosphoribosylamino)methylideneamino] imidazole-4-carboxamide isomerase, found in Alteromonas mediterranea (strain DSM 17117 / CIP 110805 / LMG 28347 / Deep ecotype).